Here is a 639-residue protein sequence, read N- to C-terminus: MLHNTTDNVENNQTIKASTFDSEAFLRVVTEQAGVYRMYDSKQVVIYVGKAKQLKKRLASYFRKDVGSVKTQVLVKQIAAIEVTVTHTEGEALILENNYIKKYQPKYNILLRDDKSYPYLLITAHKHPKLGLHRGGKKVKGEYFGPFPTVGAVWESLRLMQKIFPIRQCEDSYYRARSRPCLQHQLGRCSAPCVDKISVDDYKEQVNLAKLFLQGKSSAVIEQLVARMELASNELHFELAAKYRDQIVTLRKVQQQQHVSGHVAELDVVGLYRDKTQVCIHLLFIRQHKILGSKSYFPTVPSESSDSEILQAFIAQHYLSNEMLSHGKVQSSIPKEIVIKESIEQVVELARLLSEQAEYDVKISTNTRSERAQYLKLAGTNAHTALVTRNSHKESMQARFVALNEVFELENGIQRIECFDISHTMGQQTVASNVVFNQEGPLKTDYRRYNVFGITPGDDYAAMAFALNKRYGKLKANPIKPEEHGALEKLPDIVFIDGGKGQLAKAEEFFSQLALTRTPLLVGVAKGESRKPGLETLILAGSHQLISLPATSPALHLVQHIRDESHRFAITGHRAKRQKVSKKSRLESIEGIGAKKRQSLLTFLGGLQEVMQADITALAKVPGISHVLAEKIHNALHDK.

Residues 31–109 enclose the GIY-YIG domain; the sequence is EQAGVYRMYD…IKKYQPKYNI (79 aa). A UVR domain is found at 218-253; that stretch reads SAVIEQLVARMELASNELHFELAAKYRDQIVTLRKV.

This sequence belongs to the UvrC family. In terms of assembly, interacts with UvrB in an incision complex.

It localises to the cytoplasm. Functionally, the UvrABC repair system catalyzes the recognition and processing of DNA lesions. UvrC both incises the 5' and 3' sides of the lesion. The N-terminal half is responsible for the 3' incision and the C-terminal half is responsible for the 5' incision. The protein is UvrABC system protein C of Colwellia psychrerythraea (strain 34H / ATCC BAA-681) (Vibrio psychroerythus).